The primary structure comprises 135 residues: Succinate dehydrogenase assembly factor 2, mitochondrial (135 aa).

This sequence belongs to the SDHAF2 family. Interacts with the flavoprotein subunit within the SDH catalytic dimer.

It localises to the mitochondrion matrix. Its function is as follows. Plays an essential role in the assembly of succinate dehydrogenase (SDH), an enzyme complex (also referred to as respiratory complex II) that is a component of both the tricarboxylic acid (TCA) cycle and the mitochondrial electron transport chain, and which couples the oxidation of succinate to fumarate with the reduction of ubiquinone (coenzyme Q) to ubiquinol. Required for flavinylation (covalent attachment of FAD) of the flavoprotein subunit of the SDH catalytic dimer. In Meyerozyma guilliermondii (strain ATCC 6260 / CBS 566 / DSM 6381 / JCM 1539 / NBRC 10279 / NRRL Y-324) (Yeast), this protein is Succinate dehydrogenase assembly factor 2, mitochondrial.